We begin with the raw amino-acid sequence, 281 residues long: 4-diphosphocytidyl-2-C-methyl-D-erythritol kinase (281 aa).

Residue Lys-11 is part of the active site. 92–102 contacts ATP; sequence LVSAGLAGGSA. The active site involves Asp-132.

This sequence belongs to the GHMP kinase family. IspE subfamily.

It catalyses the reaction 4-CDP-2-C-methyl-D-erythritol + ATP = 4-CDP-2-C-methyl-D-erythritol 2-phosphate + ADP + H(+). It functions in the pathway isoprenoid biosynthesis; isopentenyl diphosphate biosynthesis via DXP pathway; isopentenyl diphosphate from 1-deoxy-D-xylulose 5-phosphate: step 3/6. Functionally, catalyzes the phosphorylation of the position 2 hydroxy group of 4-diphosphocytidyl-2C-methyl-D-erythritol. The protein is 4-diphosphocytidyl-2-C-methyl-D-erythritol kinase of Ehrlichia ruminantium (strain Welgevonden).